A 681-amino-acid polypeptide reads, in one-letter code: UvrABC system protein C (681 aa).

Positions 16–95 (DSPGVYKFRD…IKEYDPRFNV (80 aa)) constitute a GIY-YIG domain. The UVR domain occupies 208-243 (GTYIRRLERQMTDAAEEMEYEKAARLRDDIGALKKA). Positions 650–681 (EIMEDEEPGTTAGSSQEPVSAGTSDERRGQET) are disordered. Polar residues predominate over residues 660–672 (TAGSSQEPVSAGT).

It belongs to the UvrC family. As to quaternary structure, interacts with UvrB in an incision complex.

Its subcellular location is the cytoplasm. The UvrABC repair system catalyzes the recognition and processing of DNA lesions. UvrC both incises the 5' and 3' sides of the lesion. The N-terminal half is responsible for the 3' incision and the C-terminal half is responsible for the 5' incision. The sequence is that of UvrABC system protein C from Streptomyces avermitilis (strain ATCC 31267 / DSM 46492 / JCM 5070 / NBRC 14893 / NCIMB 12804 / NRRL 8165 / MA-4680).